Consider the following 364-residue polypeptide: Alanine racemase (364 aa).

Catalysis depends on Lys-34, which acts as the Proton acceptor; specific for D-alanine. Residue Lys-34 is modified to N6-(pyridoxal phosphate)lysine. Residue Arg-129 coordinates substrate. Tyr-259 functions as the Proton acceptor; specific for L-alanine in the catalytic mechanism. Met-307 is a binding site for substrate.

It belongs to the alanine racemase family. It depends on pyridoxal 5'-phosphate as a cofactor.

The catalysed reaction is L-alanine = D-alanine. The protein operates within amino-acid biosynthesis; D-alanine biosynthesis; D-alanine from L-alanine: step 1/1. Catalyzes the interconversion of L-alanine and D-alanine. May also act on other amino acids. The polypeptide is Alanine racemase (alr) (Coxiella burnetii (strain CbuG_Q212) (Coxiella burnetii (strain Q212))).